Here is a 166-residue protein sequence, read N- to C-terminus: Phosphopantetheine adenylyltransferase (166 aa).

S11 lines the substrate pocket. ATP is bound by residues 11–12 and H19; that span reads SF. Residues K43, A76, and R90 each coordinate substrate. ATP is bound by residues 91 to 93, E101, and 126 to 132; these read GLR and MQPISSS.

This sequence belongs to the bacterial CoaD family. In terms of assembly, homohexamer. Requires Mg(2+) as cofactor.

It is found in the cytoplasm. The enzyme catalyses (R)-4'-phosphopantetheine + ATP + H(+) = 3'-dephospho-CoA + diphosphate. It participates in cofactor biosynthesis; coenzyme A biosynthesis; CoA from (R)-pantothenate: step 4/5. Reversibly transfers an adenylyl group from ATP to 4'-phosphopantetheine, yielding dephospho-CoA (dPCoA) and pyrophosphate. This chain is Phosphopantetheine adenylyltransferase, found in Streptococcus uberis (strain ATCC BAA-854 / 0140J).